The chain runs to 349 residues: Ribosomal RNA small subunit methyltransferase C (349 aa).

This sequence belongs to the methyltransferase superfamily. RsmC family. In terms of assembly, monomer.

It localises to the cytoplasm. The catalysed reaction is guanosine(1207) in 16S rRNA + S-adenosyl-L-methionine = N(2)-methylguanosine(1207) in 16S rRNA + S-adenosyl-L-homocysteine + H(+). In terms of biological role, specifically methylates the guanine in position 1207 of 16S rRNA in the 30S particle. This Psychromonas ingrahamii (strain DSM 17664 / CCUG 51855 / 37) protein is Ribosomal RNA small subunit methyltransferase C.